The following is a 422-amino-acid chain: Exodeoxyribonuclease 7 large subunit (422 aa).

The protein belongs to the XseA family. In terms of assembly, heterooligomer composed of large and small subunits.

Its subcellular location is the cytoplasm. The enzyme catalyses Exonucleolytic cleavage in either 5'- to 3'- or 3'- to 5'-direction to yield nucleoside 5'-phosphates.. In terms of biological role, bidirectionally degrades single-stranded DNA into large acid-insoluble oligonucleotides, which are then degraded further into small acid-soluble oligonucleotides. This chain is Exodeoxyribonuclease 7 large subunit, found in Leptospira borgpetersenii serovar Hardjo-bovis (strain JB197).